The chain runs to 257 residues: Na(+)-translocating NADH-quinone reductase subunit C (257 aa).

A helical membrane pass occupies residues 12–32; the sequence is LFVVIALSLVCSIIVSAAAVG. Threonine 225 carries the post-translational modification FMN phosphoryl threonine.

The protein belongs to the NqrC family. Composed of six subunits; NqrA, NqrB, NqrC, NqrD, NqrE and NqrF. The cofactor is FMN.

The protein localises to the cell inner membrane. It carries out the reaction a ubiquinone + n Na(+)(in) + NADH + H(+) = a ubiquinol + n Na(+)(out) + NAD(+). Its function is as follows. NQR complex catalyzes the reduction of ubiquinone-1 to ubiquinol by two successive reactions, coupled with the transport of Na(+) ions from the cytoplasm to the periplasm. NqrA to NqrE are probably involved in the second step, the conversion of ubisemiquinone to ubiquinol. In Vibrio cholerae serotype O1 (strain ATCC 39541 / Classical Ogawa 395 / O395), this protein is Na(+)-translocating NADH-quinone reductase subunit C.